The primary structure comprises 122 residues: Hexon-interlacing protein (122 aa).

A coiled-coil region spans residues 72 to 106 (VTELNESIDELQQKMTELEKRLKIMEEKIEEIKLA).

This sequence belongs to the adenoviridae hexon-interlacing protein family. Homotrimer. Interacts with hexon protein; this interaction tethers the hexons together. Self-interacts with adjacent proteins. Interacts with kinesin light chain KLC1; this interaction leads to capsid disruption at the nuclear pore complex during virus entry into host cell.

It is found in the virion. Its subcellular location is the host nucleus. Structural component of the virion that acts as a cement protein on the capsid exterior and forms triskelion structures consisting of three molecules that stabilize three hexon trimers at the center of each icosahedral facet and fixes the peripentonal hexons. Dispensable for assembly. During virus entry, recruits the anterograde motor kinesin-1 to the capsid docked at the nuclear pore complex thereby subjecting the docked capsid to a pulling force. The resulting tension leads to capsid disruption, dispersion of capsid fragments toward cell periphery and eventually viral DNA entry into the host nucleus. The protein is Hexon-interlacing protein of Tupaiidae (tree shrews).